Here is a 323-residue protein sequence, read N- to C-terminus: Magnesium transporter NIPA1 (323 aa).

Residues Met1–Ala21 lie on the Extracellular side of the membrane. Residues Val22–Leu42 traverse the membrane as a helical segment. At Gln43–Asp60 the chain is on the cytoplasmic side. A helical membrane pass occupies residues Ile61–Tyr81. Thr82 is a topological domain (extracellular). A helical transmembrane segment spans residues Ala83–Leu103. At Ala104–Lys111 the chain is on the cytoplasmic side. A helical transmembrane segment spans residues Leu112–Ile132. Residues His133 to Pro153 lie on the Extracellular side of the membrane. The helical transmembrane segment at Val154–Ala174 threads the bilayer. Over Pro175–His177 the chain is Cytoplasmic. Residues Gly178–Pro198 traverse the membrane as a helical segment. Topologically, residues Ser199–Gln218 are extracellular. A helical membrane pass occupies residues Arg219–Phe239. Residues Arg240–Val253 lie on the Cytoplasmic side of the membrane. Residues Phe254–Phe274 form a helical membrane-spanning segment. The Extracellular segment spans residues Arg275–Asp284. Residues Phe285–Phe305 traverse the membrane as a helical segment. At Lys306–Asp323 the chain is on the cytoplasmic side.

This sequence belongs to the NIPA family. Homodimer. In terms of tissue distribution, widely expressed. Predominantly expressed in neuronal tissues. Brain, heart, kidney, liver and colon (at protein level).

The protein resides in the cell membrane. Its subcellular location is the early endosome. It catalyses the reaction Mg(2+)(in) = Mg(2+)(out). Functionally, acts as a Mg(2+) transporter. Can also transport other divalent cations such as Fe(2+), Sr(2+), Ba(2+), Zn(2+) and Co(2+) but to a much less extent than Mg(2+). In Mus musculus (Mouse), this protein is Magnesium transporter NIPA1 (Nipa1).